Reading from the N-terminus, the 138-residue chain is Transcription antitermination protein NusB (138 aa).

This sequence belongs to the NusB family.

Involved in transcription antitermination. Required for transcription of ribosomal RNA (rRNA) genes. Binds specifically to the boxA antiterminator sequence of the ribosomal RNA (rrn) operons. The polypeptide is Transcription antitermination protein NusB (Photorhabdus laumondii subsp. laumondii (strain DSM 15139 / CIP 105565 / TT01) (Photorhabdus luminescens subsp. laumondii)).